The chain runs to 254 residues: uncharacterized protein (254 aa).

The protein belongs to the nucleoside-specific channel-forming outer membrane porin (Tsx) (TC 1.B.10) family.

This is an uncharacterized protein from Escherichia coli (strain K12).